The chain runs to 65 residues: Large ribosomal subunit protein bL35 (65 aa).

The protein belongs to the bacterial ribosomal protein bL35 family.

The protein is Large ribosomal subunit protein bL35 of Desulfitobacterium hafniense (strain DSM 10664 / DCB-2).